The primary structure comprises 199 residues: Ribonuclease HII (199 aa).

In terms of domain architecture, RNase H type-2 spans 13-199 (GLVAGVDEVG…FAPIAKILCG (187 aa)). Residues aspartate 19, glutamate 20, and aspartate 110 each coordinate a divalent metal cation.

The protein belongs to the RNase HII family. Mn(2+) serves as cofactor. It depends on Mg(2+) as a cofactor.

The protein localises to the cytoplasm. It catalyses the reaction Endonucleolytic cleavage to 5'-phosphomonoester.. Its function is as follows. Endonuclease that specifically degrades the RNA of RNA-DNA hybrids. This Jannaschia sp. (strain CCS1) protein is Ribonuclease HII.